A 186-amino-acid chain; its full sequence is Large ribosomal subunit protein uL10 (186 aa).

This sequence belongs to the universal ribosomal protein uL10 family. In terms of assembly, part of the ribosomal stalk of the 50S ribosomal subunit. The N-terminus interacts with L11 and the large rRNA to form the base of the stalk. The C-terminus forms an elongated spine to which L12 dimers bind in a sequential fashion forming a multimeric L10(L12)X complex.

In terms of biological role, forms part of the ribosomal stalk, playing a central role in the interaction of the ribosome with GTP-bound translation factors. In Rhodococcus jostii (strain RHA1), this protein is Large ribosomal subunit protein uL10.